The primary structure comprises 734 residues: PI-PLC X-box domain-containing protein DDB_G0293730 (734 aa).

Residues 8–70 (IKNILLKIEK…ELNEKLIVEK (63 aa)) are a coiled coil. Positions 440 to 604 (KLKDRKVRNL…CIYDDLVNPL (165 aa)) constitute a PI-PLC X-box domain.

In Dictyostelium discoideum (Social amoeba), this protein is PI-PLC X-box domain-containing protein DDB_G0293730.